The following is a 151-amino-acid chain: MPKTIYVLNGPNLNLLGTREPDVYGHATLADVERLCAETASGYGLAVDCRQSNHEGDLIDFIHDARATGAIGIVINPGGYTHTSIALHDALAAVQIPAVEVHVSNIHARESFRQHSFTAKAAFASLCGFGIDGYRLAISGLAAKLGITAKA.

The active-site Proton acceptor is Y24. Residues N76, H82, and D89 each contribute to the substrate site. H102 acts as the Proton donor in catalysis. Residues 103–104 (VS) and R113 contribute to the substrate site.

This sequence belongs to the type-II 3-dehydroquinase family. Homododecamer.

The enzyme catalyses 3-dehydroquinate = 3-dehydroshikimate + H2O. Its pathway is metabolic intermediate biosynthesis; chorismate biosynthesis; chorismate from D-erythrose 4-phosphate and phosphoenolpyruvate: step 3/7. In terms of biological role, catalyzes a trans-dehydration via an enolate intermediate. The sequence is that of 3-dehydroquinate dehydratase from Rhodopseudomonas palustris (strain BisA53).